The sequence spans 80 residues: Raniseptin-1 (80 aa).

An N-terminal signal peptide occupies residues 1–22 (MAFLKKSLFLVLFLGIVSLSIC). Residues 23–49 (EEEKREGEEEEKQEEENEELSEEELRE) constitute a propeptide that is removed on maturation.

This sequence belongs to the frog skin active peptide (FSAP) family. Dermaseptin subfamily. As to expression, expressed by the skin glands.

It is found in the secreted. Its function is as follows. Has antibacterial activity against the Gram-negative bacteria E.coli ATCC 25922 (MIC=5 uM), P.aeruginosa ATCC 27853 (MIC=10 uM) and X.citri (MIC&lt; 2 uM), and the Gram-positive bacterium S.aureus ATCC 29313 (MIC=20 uM). Does not have hemolytic activity against human erythrocytes. In Boana raniceps (Chaco tree frog), this protein is Raniseptin-1.